The sequence spans 532 residues: Nitrogenase molybdenum-iron protein alpha chain (532 aa).

Cys-62, Cys-88, and Cys-153 together coordinate [8Fe-7S] cluster. [7Fe-Mo-9S-C-homocitryl] cluster contacts are provided by Cys-271 and His-489.

Belongs to the NifD/NifK/NifE/NifN family. Tetramer of two alpha and two beta chains. Forms complex with the iron protein (nitrogenase component 2). [8Fe-7S] cluster is required as a cofactor. [7Fe-Mo-9S-C-homocitryl] cluster serves as cofactor.

The enzyme catalyses N2 + 8 reduced [2Fe-2S]-[ferredoxin] + 16 ATP + 16 H2O = H2 + 8 oxidized [2Fe-2S]-[ferredoxin] + 2 NH4(+) + 16 ADP + 16 phosphate + 6 H(+). This molybdenum-iron protein is part of the nitrogenase complex that catalyzes the key enzymatic reactions in nitrogen fixation. The chain is Nitrogenase molybdenum-iron protein alpha chain (nifD2) from Methanosarcina barkeri.